The primary structure comprises 264 residues: Non-homologous end-joining factor xrc4 (264 aa).

Residues 173-186 are compositionally biased toward basic and acidic residues; the sequence is RNNEDNEDNHHINY. The segment at 173 to 264 is disordered; it reads RNNEDNEDNH…SHESSETVSE (92 aa). Residues 200 to 209 are compositionally biased toward polar residues; that stretch reads QEGVNSSAVS. Residues 248–264 are compositionally biased toward basic and acidic residues; sequence DDSHRRSSHESSETVSE.

The protein belongs to the XRCC4-XLF family. XRCC4 subfamily. Interacts with lig4; the interaction is direct.

The protein localises to the nucleus. Functionally, involved in double-strand break repair via non-homologous end joining (NHEJ); the repair of a double-strand break in DNA in which the two broken ends are rejoined with little or no sequence complementarity. In Schizosaccharomyces pombe (strain 972 / ATCC 24843) (Fission yeast), this protein is Non-homologous end-joining factor xrc4.